The sequence spans 541 residues: Phosphoenolpyruvate carboxykinase (ATP) (541 aa).

Residues arginine 67, tyrosine 207, and lysine 213 each contribute to the substrate site. ATP is bound by residues lysine 213, histidine 232, and 248–256 (GLSGTGKTT). Mn(2+) contacts are provided by lysine 213 and histidine 232. Aspartate 269 lines the Mn(2+) pocket. ATP is bound by residues glutamate 297, arginine 333, 449-450 (RI), and threonine 455. Arginine 333 contributes to the substrate binding site.

This sequence belongs to the phosphoenolpyruvate carboxykinase (ATP) family. Monomer. Requires Mn(2+) as cofactor.

The protein localises to the cytoplasm. It catalyses the reaction oxaloacetate + ATP = phosphoenolpyruvate + ADP + CO2. It functions in the pathway carbohydrate biosynthesis; gluconeogenesis. Functionally, involved in the gluconeogenesis. Catalyzes the conversion of oxaloacetate (OAA) to phosphoenolpyruvate (PEP) through direct phosphoryl transfer between the nucleoside triphosphate and OAA. The chain is Phosphoenolpyruvate carboxykinase (ATP) from Vibrio atlanticus (strain LGP32) (Vibrio splendidus (strain Mel32)).